We begin with the raw amino-acid sequence, 295 residues long: Inositol monophosphatase 1 (295 aa).

Residues glutamate 73, aspartate 92, isoleucine 94, aspartate 95, and aspartate 231 each contribute to the Mg(2+) site. Glutamate 73 is a binding site for substrate. Substrate contacts are provided by residues 94–97 (IDGT) and aspartate 231.

The protein belongs to the inositol monophosphatase superfamily. The cofactor is Mg(2+).

Its subcellular location is the cytoplasm. The protein resides in the nucleus. The catalysed reaction is a myo-inositol phosphate + H2O = myo-inositol + phosphate. Its pathway is polyol metabolism; myo-inositol biosynthesis; myo-inositol from D-glucose 6-phosphate: step 2/2. Its activity is regulated as follows. Inhibited by Li(+) and Na(+). Its function is as follows. Responsible for the provision of inositol required for synthesis of phosphatidylinositol and polyphosphoinositides. The protein is Inositol monophosphatase 1 (INM1) of Saccharomyces cerevisiae (strain ATCC 204508 / S288c) (Baker's yeast).